Consider the following 428-residue polypeptide: Acylglycerol kinase, mitochondrial (428 aa).

Positions 18 to 34 (STVGFCLLAYGSHWLYG) are hydrophobic. The region spanning 61 to 202 (SAIKKATVFL…LDVLQIKGEQ (142 aa)) is the DAGKc domain.

It belongs to the AGK family. As to quaternary structure, component of the TIM22 complex. Mg(2+) is required as a cofactor.

It localises to the mitochondrion inner membrane. Its subcellular location is the mitochondrion intermembrane space. It carries out the reaction a monoacylglycerol + ATP = a monoacyl-sn-glycero-3-phosphate + ADP + H(+). The catalysed reaction is a 1,2-diacyl-sn-glycerol + ATP = a 1,2-diacyl-sn-glycero-3-phosphate + ADP + H(+). The enzyme catalyses an N-acylsphing-4-enine + ATP = an N-acylsphing-4-enine 1-phosphate + ADP + H(+). It catalyses the reaction 1-(9Z-octadecenoyl)-sn-glycerol + ATP = 1-(9Z-octadecenoyl)-sn-glycero-3-phosphate + ADP + H(+). It carries out the reaction 1,2-di-(9Z-octadecenoyl)-sn-glycerol + ATP = 1,2-di-(9Z-octadecenoyl)-sn-glycero-3-phosphate + ADP + H(+). The catalysed reaction is a 1-acyl-sn-glycerol + ATP = a 1-acyl-sn-glycero-3-phosphate + ADP + H(+). The enzyme catalyses 1-hexadecanoyl-sn-glycerol + ATP = 1-hexadecanoyl-sn-glycero-3-phosphate + ADP + H(+). It catalyses the reaction a 2-acylglycerol + ATP = a 2-acyl-sn-glycerol 3-phosphate + ADP + H(+). It carries out the reaction 2-(5Z,8Z,11Z,14Z-eicosatetraenoyl)-glycerol + ATP = 2-(5Z,8Z,11Z,14Z-eicosatetraenoyl)-sn-glycero-3-phosphate + ADP + H(+). The catalysed reaction is 1-(5Z,8Z,11Z,14Z-eicosatetraenoyl)-sn-glycerol + ATP = 1-(5Z,8Z,11Z,14Z-eicosatetraenoyl)-sn-glycero-3-phosphate + ADP + H(+). The enzyme catalyses N-(hexanoyl)sphing-4-enine + ATP = N-hexanoylsphing-4-enine 1-phosphate + ADP + H(+). It functions in the pathway lipid metabolism; glycerolipid metabolism. Lipid kinase that can phosphorylate both monoacylglycerol and diacylglycerol to form lysophosphatidic acid (LPA) and phosphatidic acid (PA), respectively. Phosphorylates ceramide but not sphingosine. Phosphorylates 1,2-dioleoylglycerol more rapidly than 2,3-dioleoylglycerol. Independently of its lipid kinase activity, acts as a component of the TIM22 complex. The TIM22 complex mediates the import and insertion of multi-pass transmembrane proteins into the mitochondrial inner membrane by forming a twin-pore translocase that uses the membrane potential as the external driving force. The sequence is that of Acylglycerol kinase, mitochondrial from Xenopus laevis (African clawed frog).